Here is a 486-residue protein sequence, read N- to C-terminus: MSEPKEPSPALACAAQDGSGLPEGWLQVQSMDLDAQGVARRADGKVVFIDGALPSEWVSASTYRKKNHWEQANLTAIHRESAQRVRPGCPHFGLHAGACGGCKMQHLHMGGQVAVKQRVLEDNLWHLGRVKPAMVLRPIEGPAWGYRYRARLSVRHVIKKGVVLVGFHERKSRYVADMAQCPVLPPHAAALLMPLRSLIAALDAHDSCPQIELACGDSVTALVLRHLQPLSVGDHARLRAFAAEHGVQWWLQPRGPDTVQPLDEGGEQLSYALPDFGITMPFKPTDFTQVNPHINRVLVARALRLLAVRPDERVIDWFCGLGNFTLPLATQARAVLGVEGNAALVARARANHGLNQALAQNHRVLAATDFVACNLFAMTPGMLLGHGAADKWLVDPPREGALALVKALADIEQSRRGAQGATALPAGAEDWVPPRRIVYVSCNPATLARDAALLVHLAGYQCAAAGMVNMFPHTAHVESIAVFERG.

Residues 14–76 (AAQDGSGLPE…NHWEQANLTA (63 aa)) enclose the TRAM domain. 4 residues coordinate [4Fe-4S] cluster: Cys89, Cys99, Cys102, and Cys181. S-adenosyl-L-methionine contacts are provided by Gln289, Phe318, Asn323, Glu339, Asn374, and Asp395. Cys442 functions as the Nucleophile in the catalytic mechanism.

This sequence belongs to the class I-like SAM-binding methyltransferase superfamily. RNA M5U methyltransferase family. RlmD subfamily.

It carries out the reaction uridine(1939) in 23S rRNA + S-adenosyl-L-methionine = 5-methyluridine(1939) in 23S rRNA + S-adenosyl-L-homocysteine + H(+). Its function is as follows. Catalyzes the formation of 5-methyl-uridine at position 1939 (m5U1939) in 23S rRNA. The protein is 23S rRNA (uracil(1939)-C(5))-methyltransferase RlmD of Verminephrobacter eiseniae (strain EF01-2).